The chain runs to 28 residues: MLPSISFDYIKRPNIVLFSNVLSLSSNI.

This is an uncharacterized protein from Saccharomyces cerevisiae (strain ATCC 204508 / S288c) (Baker's yeast).